A 242-amino-acid chain; its full sequence is 1-(5-phosphoribosyl)-5-[(5-phosphoribosylamino)methylideneamino] imidazole-4-carboxamide isomerase (242 aa).

The Proton acceptor role is filled by D8. D130 functions as the Proton donor in the catalytic mechanism.

It belongs to the HisA/HisF family.

It is found in the cytoplasm. The enzyme catalyses 1-(5-phospho-beta-D-ribosyl)-5-[(5-phospho-beta-D-ribosylamino)methylideneamino]imidazole-4-carboxamide = 5-[(5-phospho-1-deoxy-D-ribulos-1-ylimino)methylamino]-1-(5-phospho-beta-D-ribosyl)imidazole-4-carboxamide. Its pathway is amino-acid biosynthesis; L-histidine biosynthesis; L-histidine from 5-phospho-alpha-D-ribose 1-diphosphate: step 4/9. The chain is 1-(5-phosphoribosyl)-5-[(5-phosphoribosylamino)methylideneamino] imidazole-4-carboxamide isomerase from Thioalkalivibrio sulfidiphilus (strain HL-EbGR7).